The following is a 104-amino-acid chain: Pyrimidine/purine nucleoside phosphorylase (104 aa).

Belongs to the nucleoside phosphorylase PpnP family.

The enzyme catalyses a purine D-ribonucleoside + phosphate = a purine nucleobase + alpha-D-ribose 1-phosphate. It catalyses the reaction adenosine + phosphate = alpha-D-ribose 1-phosphate + adenine. The catalysed reaction is cytidine + phosphate = cytosine + alpha-D-ribose 1-phosphate. It carries out the reaction guanosine + phosphate = alpha-D-ribose 1-phosphate + guanine. The enzyme catalyses inosine + phosphate = alpha-D-ribose 1-phosphate + hypoxanthine. It catalyses the reaction thymidine + phosphate = 2-deoxy-alpha-D-ribose 1-phosphate + thymine. The catalysed reaction is uridine + phosphate = alpha-D-ribose 1-phosphate + uracil. It carries out the reaction xanthosine + phosphate = alpha-D-ribose 1-phosphate + xanthine. In terms of biological role, catalyzes the phosphorolysis of diverse nucleosides, yielding D-ribose 1-phosphate and the respective free bases. Can use uridine, adenosine, guanosine, cytidine, thymidine, inosine and xanthosine as substrates. Also catalyzes the reverse reactions. This is Pyrimidine/purine nucleoside phosphorylase from Trichlorobacter lovleyi (strain ATCC BAA-1151 / DSM 17278 / SZ) (Geobacter lovleyi).